The following is a 148-amino-acid chain: MNQVVIYTDGACKGNPGPGGWGAVLRSGTLEKELFGGELGTTNNRMELMAVIQALGALKRPCQVALYLDSQYVRQGITEWIHGWKKKGWRTAAGQPVKNVELWQRLDELAHQAGHRIEWHWVRGHAGDPGNERADMLANKGVEQVLGR.

In terms of domain architecture, RNase H type-1 spans 1–143 (MNQVVIYTDG…ADMLANKGVE (143 aa)). Asp9, Glu47, Asp69, and Asp135 together coordinate Mg(2+).

It belongs to the RNase H family. In terms of assembly, monomer. Mg(2+) serves as cofactor.

It localises to the cytoplasm. The catalysed reaction is Endonucleolytic cleavage to 5'-phosphomonoester.. Its function is as follows. Endonuclease that specifically degrades the RNA of RNA-DNA hybrids. This is Ribonuclease H from Acidovorax sp. (strain JS42).